The sequence spans 278 residues: HTH-type transcriptional regulator HdfR (278 aa).

The 58-residue stretch at 1-58 (MDTELLKTFLEVSRTRHFGRAAEALYLTQSAVSFRIRQLENQLGVNLFTRHRNNIRLT) folds into the HTH lysR-type domain. A DNA-binding region (H-T-H motif) is located at residues 18-37 (FGRAAEALYLTQSAVSFRIR).

It belongs to the LysR transcriptional regulatory family.

Functionally, negatively regulates the transcription of the flagellar master operon flhDC by binding to the upstream region of the operon. In Salmonella newport (strain SL254), this protein is HTH-type transcriptional regulator HdfR.